We begin with the raw amino-acid sequence, 245 residues long: Orotidine 5'-phosphate decarboxylase (245 aa).

Residues aspartate 22, lysine 44, 71-80, threonine 131, arginine 192, glutamine 201, glycine 221, and arginine 222 each bind substrate; that span reads DLKFHDIPNT. Lysine 73 serves as the catalytic Proton donor.

This sequence belongs to the OMP decarboxylase family. Type 1 subfamily. Homodimer.

The catalysed reaction is orotidine 5'-phosphate + H(+) = UMP + CO2. It functions in the pathway pyrimidine metabolism; UMP biosynthesis via de novo pathway; UMP from orotate: step 2/2. Functionally, catalyzes the decarboxylation of orotidine 5'-monophosphate (OMP) to uridine 5'-monophosphate (UMP). In Escherichia coli O127:H6 (strain E2348/69 / EPEC), this protein is Orotidine 5'-phosphate decarboxylase.